Here is a 57-residue protein sequence, read N- to C-terminus: Small ribosomal subunit protein eS31 (57 aa).

Residues Cys-29, Cys-32, Cys-47, and Cys-50 each contribute to the Zn(2+) site. The C4-type zinc finger occupies 29-50 (CSRCGKGTYMSEHKDRNTCGKC).

Belongs to the eukaryotic ribosomal protein eS31 family. In terms of assembly, part of the 30S ribosomal subunit. Zn(2+) serves as cofactor.

This chain is Small ribosomal subunit protein eS31, found in Nitrosopumilus maritimus (strain SCM1).